The chain runs to 117 residues: Large ribosomal subunit protein uL18 (117 aa).

This sequence belongs to the universal ribosomal protein uL18 family. As to quaternary structure, part of the 50S ribosomal subunit; part of the 5S rRNA/L5/L18/L25 subcomplex. Contacts the 5S and 23S rRNAs.

Functionally, this is one of the proteins that bind and probably mediate the attachment of the 5S RNA into the large ribosomal subunit, where it forms part of the central protuberance. This Serratia proteamaculans (strain 568) protein is Large ribosomal subunit protein uL18.